Reading from the N-terminus, the 338-residue chain is Malate dehydrogenase, mitochondrial (338 aa).

The N-terminal 24 residues, M1–N24, are a transit peptide targeting the mitochondrion. NAD(+)-binding positions include G31–G37 and D57. The O-linked (GlcNAc) serine glycan is linked to S33. K78 and K91 each carry N6-acetyllysine; alternate. An N6-succinyllysine; alternate mark is found at K78 and K91. Residues R104 and R110 each coordinate substrate. NAD(+) is bound by residues N117 and I140–N142. N142 is a binding site for substrate. K165 bears the N6-acetyllysine mark. Residue R176 participates in substrate binding. At K185 the chain carries N6-acetyllysine; alternate. K185 bears the N6-succinyllysine; alternate mark. The active-site Proton acceptor is the H200. K203 bears the N6-succinyllysine mark. K215 and K239 each carry N6-acetyllysine; alternate. N6-succinyllysine; alternate occurs at positions 215 and 239. K239 carries the N6-malonyllysine; alternate modification. S246 bears the Phosphoserine mark. M251 is an NAD(+) binding site. An N6-succinyllysine modification is found at K269. 5 positions are modified to N6-acetyllysine; alternate: K296, K301, K307, K314, and K324. K296, K301, K307, K314, and K324 each carry N6-succinyllysine; alternate. K307 bears the N6-malonyllysine; alternate mark. S326 carries the phosphoserine modification. An N6-acetyllysine; alternate mark is found at K328, K329, and K335. An N6-succinyllysine; alternate modification is found at K328. An N6-malonyllysine; alternate modification is found at K329. At K335 the chain carries N6-succinyllysine; alternate.

It belongs to the LDH/MDH superfamily. MDH type 1 family. As to quaternary structure, homodimer. Post-translationally, acetylation is enhanced after treatment either with trichostin A (TCA) or with nicotinamide (NAM) with the appearance of tri- and tetraacetylations. Glucose also increases acetylation.

The protein localises to the mitochondrion matrix. The catalysed reaction is (S)-malate + NAD(+) = oxaloacetate + NADH + H(+). Its activity is regulated as follows. Enzyme activity is enhanced by acetylation. The protein is Malate dehydrogenase, mitochondrial (MDH2) of Sus scrofa (Pig).